The chain runs to 217 residues: MRDAEFWHNKWASNQIGFHLEDVNPLLTRFWSALAPKREETVLVPLCGKTEDLAWLATKHDHVEGAELSLIAVRSFFAEHFYTPTVTPISGQHELYQFDELSIYAGDFFTAPLSKADLIYDRAALIALPEEMRVEYVQRIRGLLNPGGRILLVSLDYPQQEMAGPPFSVTQEEIEHLFAGMHVTRLYQDIADEHHPKIAKQGLSRFSEEVYVIENDK.

The S-adenosyl-L-methionine site is built by tryptophan 11, leucine 46, glutamate 67, and arginine 122.

The protein belongs to the class I-like SAM-binding methyltransferase superfamily. TPMT family.

It localises to the cytoplasm. The enzyme catalyses S-adenosyl-L-methionine + a thiopurine = S-adenosyl-L-homocysteine + a thiopurine S-methylether.. This Vibrio vulnificus (strain YJ016) protein is Thiopurine S-methyltransferase.